The primary structure comprises 350 residues: N-acetyl-gamma-glutamyl-phosphate reductase (350 aa).

C153 is an active-site residue.

It belongs to the NAGSA dehydrogenase family. Type 1 subfamily.

It is found in the cytoplasm. The enzyme catalyses N-acetyl-L-glutamate 5-semialdehyde + phosphate + NADP(+) = N-acetyl-L-glutamyl 5-phosphate + NADPH + H(+). Its pathway is amino-acid biosynthesis; L-arginine biosynthesis; N(2)-acetyl-L-ornithine from L-glutamate: step 3/4. Catalyzes the NADPH-dependent reduction of N-acetyl-5-glutamyl phosphate to yield N-acetyl-L-glutamate 5-semialdehyde. The polypeptide is N-acetyl-gamma-glutamyl-phosphate reductase (Gloeobacter violaceus (strain ATCC 29082 / PCC 7421)).